We begin with the raw amino-acid sequence, 287 residues long: Elongation factor Ts (287 aa).

Positions 80-83 are involved in Mg(2+) ion dislocation from EF-Tu; it reads TDFL.

It belongs to the EF-Ts family.

It localises to the cytoplasm. Its function is as follows. Associates with the EF-Tu.GDP complex and induces the exchange of GDP to GTP. It remains bound to the aminoacyl-tRNA.EF-Tu.GTP complex up to the GTP hydrolysis stage on the ribosome. This is Elongation factor Ts from Pseudomonas putida (strain GB-1).